Here is a 210-residue protein sequence, read N- to C-terminus: Putative protein-lysine deacylase ABHD14B (210 aa).

At Ala-2 the chain carries N-acetylalanine. Ser-91 is subject to Phosphoserine. Catalysis depends on charge relay system residues Ser-111, Asp-162, and His-188.

This sequence belongs to the AB hydrolase superfamily. ABHD14 family. May interact with TAF1. Ubiquitous. Detected in spleen, thymus, prostate, testis, ovary, small intestine, colon, peripheral blood leukocyte, heart, placenta, lung, liver, skeletal muscle, pancreas and kidney.

The protein resides in the cytoplasm. It localises to the nucleus. It carries out the reaction L-lysyl-[protein] + acetyl-CoA = N(6)-acetyl-L-lysyl-[protein] + CoA + H(+). Functionally, acts as an atypical protein-lysine deacetylase in vitro. Catalyzes the deacetylation of lysine residues using CoA as substrate, generating acetyl-CoA and the free amine of protein-lysine residues. Additional experiments are however required to confirm the protein-lysine deacetylase activity in vivo. Has hydrolase activity towards various surrogate p-nitrophenyl (pNp) substrates, such as pNp-butyrate, pNp-acetate and pNp-octanoate in vitro, with a strong preference for pNp-acetate. May activate transcription. In Homo sapiens (Human), this protein is Putative protein-lysine deacylase ABHD14B.